A 27-amino-acid chain; its full sequence is Phospholipase A2 P-elapitoxin-Aa1a alpha chain (27 aa).

Belongs to the phospholipase A2 family. Group I subfamily. Heterotrimer of alpha, beta and gamma chains, each related to PLA2. Ca(2+) is required as a cofactor. In terms of tissue distribution, expressed by the venom gland.

The protein localises to the secreted. It carries out the reaction a 1,2-diacyl-sn-glycero-3-phosphocholine + H2O = a 1-acyl-sn-glycero-3-phosphocholine + a fatty acid + H(+). Functionally, heterotrimer: presynaptic neurotoxin. Inhibits nerve-evoked twitch contractions but not responses to cholinergic agonists acetylcholine and carbachol and to depolarizing agonist KCl. Causes a fade in tetanic contractions. Displays a triphasic mode of action with depression, enhancement and blockade of neurotransmission. Does not display myotoxic activity such as changes in baseline muscle tension or inhibition of directly stimulated muscle twitches. All subunits are necessary for maximum toxicity. In terms of biological role, monomer: Snake venom phospholipase A2 (PLA2) alpha chain that has enzymatic activity. PLA2 catalyzes the calcium-dependent hydrolysis of the 2-acyl groups in 3-sn-phosphoglycerides. The polypeptide is Phospholipase A2 P-elapitoxin-Aa1a alpha chain (Acanthophis antarcticus (Common death adder)).